A 362-amino-acid polypeptide reads, in one-letter code: C-C chemokine receptor type 10 (362 aa).

Residues 1 to 52 (MGTEATEQVSWGHYSGDEEDAYSAEPLPELCYKADVQAFSRAFQPSVSLTVA) are Extracellular-facing. Residues 53 to 68 (ALGLAGNGLVLATHLA) form a helical membrane-spanning segment. At 69 to 78 (ARRAARSPTS) the chain is on the cytoplasmic side. Residues 79–99 (AHLLQLALADLLLALTLPFAA) traverse the membrane as a helical segment. The Extracellular portion of the chain corresponds to 100–114 (AGALQGWSLGSATCR). A disulfide bond links cysteine 113 and cysteine 191. The chain crosses the membrane as a helical span at residues 115 to 136 (TISGLYSASFHAGFLFLACISA). The Cytoplasmic segment spans residues 137 to 159 (DRYVAIARALPAGPRPSTPGRAH). Residues 160-179 (LVSVIVWLLSLLLALPALLF) traverse the membrane as a helical segment. Topologically, residues 180-203 (SQDGQREGQRRCRLIFPEGLTQTV) are extracellular. A helical membrane pass occupies residues 204–225 (KGASAVAQVALGFALPLGVMVA). Topologically, residues 226 to 247 (CYALLGRTLLAARGPERRRALR) are cytoplasmic. The helical transmembrane segment at 248-269 (VVVALVAAFVVLQLPYSLALLL) threads the bilayer. Topologically, residues 270 to 290 (DTADLLAARERSCPASKRKDV) are extracellular. A helical transmembrane segment spans residues 291–313 (ALLVTSGLALARCGLNPVLYAFL). Over 314-362 (GLRFRQDLRRLLRGGSCPSGPQPRRGCPRRPRLSSCSAPTETHSLSWDN) the chain is Cytoplasmic. A compositionally biased stretch (low complexity) spans 328–338 (GSCPSGPQPRR). The disordered stretch occupies residues 328 to 362 (GSCPSGPQPRRGCPRRPRLSSCSAPTETHSLSWDN). The span at 351-362 (APTETHSLSWDN) shows a compositional bias: polar residues.

This sequence belongs to the G-protein coupled receptor 1 family. In terms of tissue distribution, expressed at high levels in adult testis, small intestine, fetal lung, fetal kidney. Weaker expression was observed in many other adult tissues including spleen, thymus, lymph node, Peyer patches, colon, heart, ovary, peripheral blood lymphocytes, thyroid and spinal cord. Also expressed by melanocytes, dermal fibroblasts, dermal microvascular endothelial cells. Also detected in T-cells and in skin-derived Langerhans cells.

It is found in the cell membrane. Receptor for chemokines SCYA27 and SCYA28. Subsequently transduces a signal by increasing the intracellular calcium ions level and stimulates chemotaxis in a pre-B cell line. The polypeptide is C-C chemokine receptor type 10 (CCR10) (Homo sapiens (Human)).